A 129-amino-acid polypeptide reads, in one-letter code: Small ribosomal subunit protein uS11 (129 aa).

This sequence belongs to the universal ribosomal protein uS11 family. In terms of assembly, part of the 30S ribosomal subunit. Interacts with proteins S7 and S18. Binds to IF-3.

Located on the platform of the 30S subunit, it bridges several disparate RNA helices of the 16S rRNA. Forms part of the Shine-Dalgarno cleft in the 70S ribosome. The sequence is that of Small ribosomal subunit protein uS11 from Symbiobacterium thermophilum (strain DSM 24528 / JCM 14929 / IAM 14863 / T).